The following is a 232-amino-acid chain: Ubiquinone biosynthesis O-methyltransferase (232 aa).

S-adenosyl-L-methionine-binding residues include arginine 36, glycine 55, aspartate 76, and leucine 120.

This sequence belongs to the methyltransferase superfamily. UbiG/COQ3 family.

It carries out the reaction a 3-demethylubiquinol + S-adenosyl-L-methionine = a ubiquinol + S-adenosyl-L-homocysteine + H(+). The enzyme catalyses a 3-(all-trans-polyprenyl)benzene-1,2-diol + S-adenosyl-L-methionine = a 2-methoxy-6-(all-trans-polyprenyl)phenol + S-adenosyl-L-homocysteine + H(+). It participates in cofactor biosynthesis; ubiquinone biosynthesis. O-methyltransferase that catalyzes the 2 O-methylation steps in the ubiquinone biosynthetic pathway. The protein is Ubiquinone biosynthesis O-methyltransferase of Pseudomonas aeruginosa (strain LESB58).